Consider the following 335-residue polypeptide: Beta-ketoacyl-[acyl-carrier-protein] synthase III 3 (335 aa).

Catalysis depends on residues Cys-114 and His-256. An ACP-binding region spans residues 257 to 261 (QANHR). Asn-286 is an active-site residue.

The protein belongs to the thiolase-like superfamily. FabH family. In terms of assembly, homodimer.

It localises to the cytoplasm. It carries out the reaction malonyl-[ACP] + acetyl-CoA + H(+) = 3-oxobutanoyl-[ACP] + CO2 + CoA. It participates in lipid metabolism; fatty acid biosynthesis. Its function is as follows. Catalyzes the condensation reaction of fatty acid synthesis by the addition to an acyl acceptor of two carbons from malonyl-ACP. Catalyzes the first condensation reaction which initiates fatty acid synthesis and may therefore play a role in governing the total rate of fatty acid production. Possesses both acetoacetyl-ACP synthase and acetyl transacylase activities. Its substrate specificity determines the biosynthesis of branched-chain and/or straight-chain of fatty acids. In Streptomyces coelicolor (strain ATCC BAA-471 / A3(2) / M145), this protein is Beta-ketoacyl-[acyl-carrier-protein] synthase III 3.